The following is a 121-amino-acid chain: Histone H2B.6 (121 aa).

Positions 1-28 (MAPKAEKKPKVEKRVPGKEGETSKKKAK) are disordered. N6-acetyllysine occurs at positions 7 and 13.

The protein belongs to the histone H2B family. In terms of assembly, the nucleosome is a histone octamer containing two molecules each of H2A, H2B, H3 and H4 assembled in one H3-H4 heterotetramer and two H2A-H2B heterodimers. The octamer wraps approximately 147 bp of DNA. In terms of processing, can be acetylated to form H2BK6ac and H2BK33ac. In terms of tissue distribution, expressed preferentially in meristematic tissues.

Its subcellular location is the nucleus. It is found in the chromosome. Core component of nucleosome. Nucleosomes wrap and compact DNA into chromatin, limiting DNA accessibility to the cellular machineries which require DNA as a template. Histones thereby play a central role in transcription regulation, DNA repair, DNA replication and chromosomal stability. DNA accessibility is regulated via a complex set of post-translational modifications of histones, also called histone code, and nucleosome remodeling. The polypeptide is Histone H2B.6 (TH123) (Triticum aestivum (Wheat)).